Reading from the N-terminus, the 1091-residue chain is Multiple epidermal growth factor-like domains protein 11 (1091 aa).

An N-terminal signal peptide occupies residues M1 to A18. At L19–S847 the chain is on the extracellular side. Residues D23 to P100 enclose the EMI domain. Intrachain disulfides connect C27-C88, C53-C62, C87-C98, C102-C117, C119-C128, C145-C153, C147-C160, C162-C171, C184-C196, C190-C203, C205-C214, C227-C239, C233-C246, and C248-C257. 9 EGF-like domains span residues N94–S129, S142–E172, H180–E215, H223–A258, F266–Q301, S314–Q344, Y398–A433, Y441–S476, and W484–E519. The N-linked (GlcNAc...) asparagine glycan is linked to N269. Disulfide bonds link C270–C282, C276–C289, C291–C300, C317–C325, C319–C332, C334–C343, C402–C414, C408–C421, C423–C432, C445–C457, C451–C464, C466–C475, C488–C500, C494–C507, and C509–C518. N530 carries an N-linked (GlcNAc...) asparagine glycan. EGF-like domains are found at residues W570–Q605, Y613–N650, F658–S693, F706–T736, G749–E779, and F787–D822. 18 disulfides stabilise this stretch: C574/C586, C580/C593, C595/C604, C617/C631, C621/C638, C640/C649, C662/C674, C668/C681, C683/C692, C709/C717, C711/C724, C726/C735, C752/C760, C754/C767, C769/C778, C791/C803, C797/C810, and C812/C821. The helical transmembrane segment at V848–F868 threads the bilayer. At A869–T1091 the chain is on the cytoplasmic side.

This sequence belongs to the MEGF family. In terms of assembly, homomer. Does not interact with MEGF10.

It is found in the cell membrane. The protein resides in the basolateral cell membrane. In terms of biological role, may regulate the mosaic spacing of specific neuron subtypes in the retina through homotypic retinal neuron repulsion. Mosaics provide a mechanism to distribute each cell type evenly across the retina, ensuring that all parts of the visual field have access to a full set of processing elements. The sequence is that of Multiple epidermal growth factor-like domains protein 11 (Megf11) from Mus musculus (Mouse).